The primary structure comprises 740 residues: Catalase-peroxidase (740 aa).

Positions 102 to 229 form a cross-link, tryptophyl-tyrosyl-methioninium (Trp-Tyr) (with M-256); it reads WHAAGTYRTG…LAAIQMGLIY (128 aa). Residue H103 is the Proton acceptor of the active site. Residues 111 to 130 form a disordered region; sequence GDGRGGSSSGQQRFAPLNSW. The segment at residues 229–256 is a cross-link (tryptophyl-tyrosyl-methioninium (Tyr-Met) (with W-102)); the sequence is YVNPEGPGGDPHDPEGMARDMRETFARM. H271 lines the heme b pocket.

It belongs to the peroxidase family. Peroxidase/catalase subfamily. Homodimer or homotetramer. The cofactor is heme b. In terms of processing, formation of the three residue Trp-Tyr-Met cross-link is important for the catalase, but not the peroxidase activity of the enzyme.

It carries out the reaction H2O2 + AH2 = A + 2 H2O. The catalysed reaction is 2 H2O2 = O2 + 2 H2O. Its function is as follows. Bifunctional enzyme with both catalase and broad-spectrum peroxidase activity. This chain is Catalase-peroxidase, found in Erythrobacter litoralis (strain HTCC2594).